We begin with the raw amino-acid sequence, 856 residues long: Envelope glycoprotein gp150 (856 aa).

The Extracellular portion of the chain corresponds to 1-785 (MAEGFAANRQ…WIGNIPQYLK (785 aa)). 17 N-linked (GlcNAc...) asparagine; by host glycosylation sites follow: N220, N258, N269, N274, N298, N330, N336, N342, N418, N422, N448, N481, N499, N518, N531, N548, and N551. A fusion peptide region spans residues 616–636 (VMLALATVLSIAGAGTGATAI). The stretch at 643 to 693 (HQVLATHQEAIEKVTGALKINNLRLVTLEHQVLVIGLKVEAMEKFLYTAFA) forms a coiled coil. The interval 662–680 (INNLRLVTLEHQVLVIGLK) is immunosuppression. N-linked (GlcNAc...) asparagine; by host glycosylation is found at N717, N721, N729, and N737. Residues 736-772 (YNQTKDLQQKFYEIIMDIEQNNVQGKTGIQQLQKWED) adopt a coiled-coil conformation. Residues 786–806 (GLLGGILGIGLGVLLLILCLP) form a helical membrane-spanning segment. The Cytoplasmic portion of the chain corresponds to 807–856 (TLVDCIRNCIHKILGYTVIAMPEVEGEEIQPQMELRRNGRQCGMSEKEEE).

The mature envelope protein (Env) consists of a trimer of SU-TM heterodimers attached by noncovalent interactions or by a labile interchain disulfide bond. Specific enzymatic cleavages in vivo yield mature proteins. Envelope glycoproteins are synthesized as an inactive precursor that is N-glycosylated and processed likely by host cell furin or by a furin-like protease in the Golgi to yield the mature SU and TM proteins. The cleavage site between SU and TM requires the minimal sequence [KR]-X-[KR]-R.

Its subcellular location is the virion membrane. It localises to the host cell membrane. In terms of biological role, the surface protein (SU) attaches the virus to the host cell by binding to its receptor. This interaction triggers the refolding of the transmembrane protein (TM) and is thought to activate its fusogenic potential by unmasking its fusion peptide. Fusion occurs at the host cell plasma membrane. The transmembrane protein (TM) acts as a class I viral fusion protein. Under the current model, the protein has at least 3 conformational states: pre-fusion native state, pre-hairpin intermediate state, and post-fusion hairpin state. During viral and target cell membrane fusion, the coiled coil regions (heptad repeats) assume a trimer-of-hairpins structure, positioning the fusion peptide in close proximity to the C-terminal region of the ectodomain. The formation of this structure appears to drive apposition and subsequent fusion of viral and target cell membranes. Membranes fusion leads to delivery of the nucleocapsid into the cytoplasm. This is Envelope glycoprotein gp150 (env) from Felidae (cat family).